The primary structure comprises 83 residues: Phytosulfokines 4 (83 aa).

The signal sequence occupies residues 1-28 (MAARTVAVAAALAVLLIFAASSATVAMA). The propeptide occupies 29–74 (GRPTPTTSLDEEAAQAAAQSEIGGGCKEGEGEEECLARRTLTAHTD). Y75 and Y77 each carry sulfotyrosine. A propeptide spanning residues 80–83 (QHHN) is cleaved from the precursor.

This sequence belongs to the phytosulfokine family. Sulfation is important for activity and for the binding to a putative membrane receptor. Post-translationally, PSK-alpha is produced by endopeptidase digestion. PSK-beta is produced from PSK-alpha by exopeptidase digestion.

The protein localises to the secreted. In terms of biological role, promotes plant cell differentiation, organogenesis and somatic embryogenesis as well as cell proliferation. In Oryza sativa subsp. japonica (Rice), this protein is Phytosulfokines 4 (PSK4).